A 216-amino-acid chain; its full sequence is Large ribosomal subunit protein uL3 (216 aa).

Over residues 133-145 (GRATHGNSRSHNV) the composition is skewed to polar residues. Residues 133-153 (GRATHGNSRSHNVPGSIGMAQ) are disordered. Gln-153 carries the post-translational modification N5-methylglutamine.

This sequence belongs to the universal ribosomal protein uL3 family. In terms of assembly, part of the 50S ribosomal subunit. Forms a cluster with proteins L14 and L19. Post-translationally, methylated by PrmB.

One of the primary rRNA binding proteins, it binds directly near the 3'-end of the 23S rRNA, where it nucleates assembly of the 50S subunit. The sequence is that of Large ribosomal subunit protein uL3 from Burkholderia cenocepacia (strain ATCC BAA-245 / DSM 16553 / LMG 16656 / NCTC 13227 / J2315 / CF5610) (Burkholderia cepacia (strain J2315)).